We begin with the raw amino-acid sequence, 602 residues long: Glutamine--fructose-6-phosphate aminotransferase [isomerizing] (602 aa).

Residue cysteine 2 is the Nucleophile; for GATase activity of the active site. One can recognise a Glutamine amidotransferase type-2 domain in the interval 2-222; the sequence is CGIFGIIFAE…DGEYGYITAG (221 aa). SIS domains lie at 284–422 and 452–592; these read VANA…ALGH and LAKR…PDKP. The active-site For Fru-6P isomerization activity is lysine 597.

Homodimer.

It localises to the cytoplasm. It carries out the reaction D-fructose 6-phosphate + L-glutamine = D-glucosamine 6-phosphate + L-glutamate. Catalyzes the first step in hexosamine metabolism, converting fructose-6P into glucosamine-6P using glutamine as a nitrogen source. This Pyrobaculum aerophilum (strain ATCC 51768 / DSM 7523 / JCM 9630 / CIP 104966 / NBRC 100827 / IM2) protein is Glutamine--fructose-6-phosphate aminotransferase [isomerizing].